The primary structure comprises 119 residues: Large ribosomal subunit protein bL20 (119 aa).

This sequence belongs to the bacterial ribosomal protein bL20 family.

In terms of biological role, binds directly to 23S ribosomal RNA and is necessary for the in vitro assembly process of the 50S ribosomal subunit. It is not involved in the protein synthesizing functions of that subunit. In Nitrosococcus oceani (strain ATCC 19707 / BCRC 17464 / JCM 30415 / NCIMB 11848 / C-107), this protein is Large ribosomal subunit protein bL20.